The primary structure comprises 871 residues: MEGAGPRGAGPARRRGAGGPPSPLLPSLLLLLLLWMLPDTVAPQELNPRGRNVCRAPGSQVPTCCAGWRQQGDECGIAVCEGNSTCSENEVCVRPGECRCRHGYFGANCDTKCPRQFWGPDCKELCSCHPHGQCEDVTGQCTCHARRWGARCEHACQCQHGTCHPRSGACRCEPGWWGAQCASACYCSATSRCDPQTGACLCHAGWWGRSCNNQCACNSSPCEQQSGRCQCRERTFGARCDRYCQCFRGRCHPVDGTCACEPGYRGKYCREPCPAGFYGLGCRRRCGQCKGQQPCTVAEGRCLTCEPGWNGTKCDQPCATGFYGEGCSHRCPPCRDGHACNHVTGKCTRCNAGWIGDRCETKCSNGTYGEDCAFVCADCGSGHCDFQSGRCLCSPGVHGPHCNVTCPPGLHGADCAQACSCHEDTCDPVTGACHLETNQRKGVMGAGALLVLLVCLLLSLLGCCCACRGKDPTRRPRPRRELSLGRKKAPHRLCGRFSRISMKLPRIPLRRQKLPKVVVAHHDLDNTLNCSFLEPPSGLEQPSPSWSSRASFSSFDTTDEGPVYCVPHEEAPAESRDPEVPTVPAEAPAPSPVPLTTPASAEEAIPLPASSDSERSASSVEGPGGALYARVARREARPARARGEIGGLSLSPSPERRKPPPPDPATKPKVSWIHGKHSAAAAGRAPSPPPPGSEAAPSPSKRKRTPSDKSAHTVEHGSPRTRDPTPRPPGLPEEATALAAPSPPRARARGRGPGLLEPTDAGGPPRSAPEAASMLAAELRGKTRSLGRAEVALGAQGPREKPAPPQKAKRSVPPASPARAPPATETPGPEKAATDLPAPETPRKKTPIQKPPRKKSREAAGELGRAGAPTL.

The disordered stretch occupies residues 1-20; that stretch reads MEGAGPRGAGPARRRGAGGP. A signal peptide spans 1–43; the sequence is MEGAGPRGAGPARRRGAGGPPSPLLPSLLLLLLLWMLPDTVAP. Residues 44-441 lie on the Extracellular side of the membrane; that stretch reads QELNPRGRNV…ACHLETNQRK (398 aa). EGF-like domains follow at residues 71–110, 122–153, 148–182, 183–212, 213–241, and 236–270; these read QGDE…ANCD, CKEL…ARCE, WGAR…AQCA, SACY…RSCN, NQCA…ARCD, and FGAR…KYCR. 18 disulfide bridges follow: cysteine 75/cysteine 86, cysteine 80/cysteine 98, cysteine 100/cysteine 109, cysteine 126/cysteine 134, cysteine 128/cysteine 141, cysteine 143/cysteine 152, cysteine 156/cysteine 163, cysteine 158/cysteine 170, cysteine 172/cysteine 181, cysteine 185/cysteine 193, cysteine 187/cysteine 200, cysteine 202/cysteine 211, cysteine 215/cysteine 222, cysteine 217/cysteine 229, cysteine 231/cysteine 240, cysteine 244/cysteine 251, cysteine 246/cysteine 258, and cysteine 260/cysteine 269. Asparagine 83 is a glycosylation site (N-linked (GlcNAc...) asparagine). Asparagine 310 and asparagine 365 each carry an N-linked (GlcNAc...) asparagine glycan. The EGF-like 7 domain maps to 372-403; that stretch reads CAFVCADCGSGHCDFQSGRCLCSPGVHGPHCN. Cystine bridges form between cysteine 376/cysteine 384, cysteine 379/cysteine 391, and cysteine 393/cysteine 402. Asparagine 403 carries an N-linked (GlcNAc...) asparagine glycan. A helical transmembrane segment spans residues 442-462; sequence GVMGAGALLVLLVCLLLSLLG. Topologically, residues 463 to 871 are cytoplasmic; that stretch reads CCCACRGKDP…ELGRAGAPTL (409 aa). Position 551 is a phosphoserine (serine 551). A compositionally biased stretch (basic and acidic residues) spans 570 to 579; it reads EAPAESRDPE. Residues 570-871 are disordered; it reads EAPAESRDPE…ELGRAGAPTL (302 aa). Phosphoserine is present on serine 613. Phosphotyrosine is present on tyrosine 628. Positions 632–643 are enriched in basic and acidic residues; sequence ARREARPARARG. Phosphoserine is present on residues serine 651, serine 653, serine 710, serine 718, and serine 742. The span at 705-725 shows a compositional bias: basic and acidic residues; that stretch reads TPSDKSAHTVEHGSPRTRDPT. The segment covering 821–831 has biased composition (low complexity); it reads PPATETPGPEK. Residues 844–856 are compositionally biased toward basic residues; it reads KKTPIQKPPRKKS. Residues 861–871 are compositionally biased toward low complexity; it reads GELGRAGAPTL.

In terms of assembly, homophilic and heterophilic interaction via its extracellular domain. Interacts with SCARF1. The heterophilic interaction with SCARF1, which is stronger than the homophilic interaction with itself, is suppressed by the presence of SCARF1 ligand such as Ac-LDL. In terms of tissue distribution, predominantly expressed in endothelial cells. Expressed in heart, placenta, lung, kidney, spleen, small intestine and ovary.

It is found in the membrane. Probable adhesion protein, which mediates homophilic and heterophilic interactions. In contrast to SCARF1, it poorly mediates the binding and degradation of acetylated low density lipoprotein (Ac-LDL). This Homo sapiens (Human) protein is Scavenger receptor class F member 2 (SCARF2).